We begin with the raw amino-acid sequence, 1083 residues long: Voltage-gated inwardly rectifying potassium channel KCNH3 (1083 aa).

At 1–228 the chain is on the cytoplasmic side; sequence MPAMRGLLAP…HCGALRATWD (228 aa). The 73-residue stretch at 18-90 folds into the PAS domain; the sequence is IATRFDGTHS…QQIRKALDEH (73 aa). A PAC domain is found at 93 to 145; sequence FKAELILYRKSGLPFWCLLDVIPIKNEKGEVALFLVSHKDISETKNRGGPDRW. Basic and acidic residues predominate over residues 137–150; sequence KNRGGPDRWKETGG. The disordered stretch occupies residues 137-157; the sequence is KNRGGPDRWKETGGGRRRYGR. The chain crosses the membrane as a helical span at residues 229 to 249; that stretch reads GFILLATLYVAVTVPYSVCVS. Topologically, residues 250–259 are extracellular; the sequence is TAREPSAARG. A helical transmembrane segment spans residues 260 to 280; the sequence is PPSVCDLAVEVLFILDIVLNF. Residues 281 to 302 are Cytoplasmic-facing; the sequence is RTTFVSKSGQVVFAPKSICLHY. The helical transmembrane segment at 303-323 threads the bilayer; the sequence is VTTWFLLDVIAALPFDLLHAF. The Extracellular portion of the chain corresponds to 324–331; the sequence is KVNVYFGA. A helical; Voltage-sensor transmembrane segment spans residues 332-352; it reads HLLKTVRLLRLLRLLPRLDRY. The Cytoplasmic segment spans residues 353–361; it reads SQYSAVVLT. A helical membrane pass occupies residues 362–382; that stretch reads LLMAVFALLAHWVACVWFYIG. Over 383-453 the chain is Extracellular; that stretch reads QREIESSESE…GGPSLRSAYI (71 aa). N-linked (GlcNAc...) asparagine glycosylation is found at N421, N428, and N436. An intramembrane region (pore-forming) is located at residues 454-474; the sequence is TSLYFALSSLTSVGFGNVSAN. The Selectivity filter motif lies at 465 to 470; sequence SVGFGN. Residues 475 to 479 lie on the Extracellular side of the membrane; the sequence is TDTEK. The chain crosses the membrane as a helical span at residues 480–500; the sequence is IFSICTMLIGALMHAVVFGNV. Residues 501-1083 are Cytoplasmic-facing; that stretch reads TAIIQRMYAR…QWTQEEGTGV (583 aa). 582-697 provides a ligand contact to a nucleoside 3',5'-cyclic phosphate; the sequence is LFEAASRGCL…FAPRFSRGLR (116 aa). 3 disordered regions span residues 729-810, 832-873, and 972-1055; these read EEKE…LRLP, CGSD…SEAR, and MAPW…ALPW. Basic residues predominate over residues 773–785; the sequence is TAPRPRLGGRGRP. Low complexity predominate over residues 844 to 861; sequence GQSGPECSSSPSPGPESG.

It belongs to the potassium channel family. H (Eag) (TC 1.A.1.20) subfamily. Kv12.2/KCNH3 sub-subfamily. In terms of assembly, the potassium channel is probably composed of a homo- or heterotetrameric complex of pore-forming alpha subunits that can associate with modulating beta subunits. Interacts with KCNE1 and KCNE3; these interactions regulate KCNH3 trafficking to the plasma membrane and its subsequent voltage-gated potassium channel activity. In terms of processing, N-glycosylated. N-glycosylation mediates traffick to the cell membrane but is not necessary for voltage-gated potassium channel activity. As to expression, detected only in brain, in particular in the telencephalon. Detected in the cerebral cortex, occipital pole, frontal and temporal lobe, putamen, amygdala, hippocampus and caudate nucleus.

The protein localises to the cell membrane. The catalysed reaction is K(+)(in) = K(+)(out). Its function is as follows. Pore-forming (alpha) subunit of a voltage-gated inwardly rectifying potassium channel. Charactherized by a fast rate of activation during depolarization followed by a rapid inactivation at much more depolarized value causing inward rectification due to a C-type inactivation mechanism. Exhibits a rapid recovery from inactivation. This is Voltage-gated inwardly rectifying potassium channel KCNH3 from Homo sapiens (Human).